A 486-amino-acid chain; its full sequence is UDP-N-acetylmuramate--L-alanine ligase (486 aa).

126–132 contacts ATP; it reads GTHGKTT.

The protein belongs to the MurCDEF family.

It localises to the cytoplasm. It catalyses the reaction UDP-N-acetyl-alpha-D-muramate + L-alanine + ATP = UDP-N-acetyl-alpha-D-muramoyl-L-alanine + ADP + phosphate + H(+). It participates in cell wall biogenesis; peptidoglycan biosynthesis. Cell wall formation. In Pectobacterium atrosepticum (strain SCRI 1043 / ATCC BAA-672) (Erwinia carotovora subsp. atroseptica), this protein is UDP-N-acetylmuramate--L-alanine ligase.